The chain runs to 349 residues: Fe(3+) ions import ATP-binding protein FbpC (349 aa).

One can recognise an ABC transporter domain in the interval 4 to 236; that stretch reads LELHHIGKSY…PVDEPTATFL (233 aa). An ATP-binding site is contributed by 36-43; that stretch reads GPSGSGKT.

The protein belongs to the ABC transporter superfamily. Fe(3+) ion importer (TC 3.A.1.10) family. As to quaternary structure, the complex is composed of two ATP-binding proteins (FbpC), two transmembrane proteins (FbpB) and a solute-binding protein (FbpA).

The protein resides in the cell inner membrane. The catalysed reaction is Fe(3+)(out) + ATP + H2O = Fe(3+)(in) + ADP + phosphate + H(+). In terms of biological role, part of the ABC transporter complex FbpABC involved in Fe(3+) ions import. Responsible for energy coupling to the transport system. The chain is Fe(3+) ions import ATP-binding protein FbpC from Yersinia pestis bv. Antiqua (strain Antiqua).